The following is a 292-amino-acid chain: GTP cyclohydrolase FolE2 (292 aa).

This sequence belongs to the GTP cyclohydrolase IV family.

It carries out the reaction GTP + H2O = 7,8-dihydroneopterin 3'-triphosphate + formate + H(+). The protein operates within cofactor biosynthesis; 7,8-dihydroneopterin triphosphate biosynthesis; 7,8-dihydroneopterin triphosphate from GTP: step 1/1. In terms of biological role, converts GTP to 7,8-dihydroneopterin triphosphate. In Staphylococcus epidermidis (strain ATCC 12228 / FDA PCI 1200), this protein is GTP cyclohydrolase FolE2.